The sequence spans 828 residues: DNA gyrase subunit A (828 aa).

The Topo IIA-type catalytic domain occupies 32 to 497; it reads LPDVRDGLKP…EVLSLEDEDL (466 aa). Residue Tyr-120 is the O-(5'-phospho-DNA)-tyrosine intermediate of the active site. The short motif at 524–530 is the GyrA-box element; that stretch reads QKRGGRG.

This sequence belongs to the type II topoisomerase GyrA/ParC subunit family. As to quaternary structure, heterotetramer, composed of two GyrA and two GyrB chains. In the heterotetramer, GyrA contains the active site tyrosine that forms a transient covalent intermediate with DNA, while GyrB binds cofactors and catalyzes ATP hydrolysis.

The protein localises to the cytoplasm. It catalyses the reaction ATP-dependent breakage, passage and rejoining of double-stranded DNA.. Functionally, a type II topoisomerase that negatively supercoils closed circular double-stranded (ds) DNA in an ATP-dependent manner to modulate DNA topology and maintain chromosomes in an underwound state. Negative supercoiling favors strand separation, and DNA replication, transcription, recombination and repair, all of which involve strand separation. Also able to catalyze the interconversion of other topological isomers of dsDNA rings, including catenanes and knotted rings. Type II topoisomerases break and join 2 DNA strands simultaneously in an ATP-dependent manner. This Streptococcus pyogenes serotype M1 protein is DNA gyrase subunit A.